A 202-amino-acid chain; its full sequence is MSTANTVAIVIYSTYGHVVKLAEAEKAGIEKAGGKAVIYQFPETLSPEILEKMHAAPKPNYPVVTLDVLTQYDAFLFGYPTRYGTPPAQFRTFWDSTGGLWVQGALHGKYFGQFFSTGTLGGGQESTALTAMTSFVHHGMIFVPLGYKNTFSLMANVESIHGGSSWGAGSYAGADGSRNVSDDELEIARIQGETFFKTVFRK.

The region spanning 7–195 is the Flavodoxin-like domain; that stretch reads VAIVIYSTYG…EIARIQGETF (189 aa). Phosphoserine is present on Ser-181.

It belongs to the WrbA family. In terms of assembly, homodimer.

In terms of biological role, unknown. Target of pap1 transcription factor. Confers brefeldin A resistance in S.pombe. This chain is P25 protein (obr1), found in Schizosaccharomyces pombe (strain 972 / ATCC 24843) (Fission yeast).